Reading from the N-terminus, the 117-residue chain is UPF0122 protein Teth514_1714 (117 aa).

The protein belongs to the UPF0122 family.

Might take part in the signal recognition particle (SRP) pathway. This is inferred from the conservation of its genetic proximity to ftsY/ffh. May be a regulatory protein. This chain is UPF0122 protein Teth514_1714, found in Thermoanaerobacter sp. (strain X514).